The chain runs to 1059 residues: Carbamoyl phosphate synthase large chain (1059 aa).

The tract at residues 1–401 (MPKRKDIQKI…SLLKACRSLE (401 aa)) is carboxyphosphate synthetic domain. Residues R129, R169, G175, G176, R208, I210, E215, G241, I242, H243, Q284, and E298 each contribute to the ATP site. Residues 133-327 (KQLMEELGQP…IAKLAAKIAV (195 aa)) enclose the ATP-grasp 1 domain. Mg(2+) is bound by residues Q284, E298, and N300. Mn(2+)-binding residues include Q284, E298, and N300. Residues 402–546 (VGVDHNELPA…YSTYGFENES (145 aa)) are oligomerization domain. Residues 547 to 929 (VKSSKESVLV…ALYKAFEASY (383 aa)) form a carbamoyl phosphate synthetic domain region. One can recognise an ATP-grasp 2 domain in the interval 671–861 (EQALKELDIP…MAQVATRLIL (191 aa)). Residues R707, S746, I748, E752, G777, V778, H779, S780, Q820, and E832 each coordinate ATP. Mg(2+) contacts are provided by Q820, E832, and N834. Residues Q820, E832, and N834 each coordinate Mn(2+). The MGS-like domain occupies 930–1059 (LHLPNFGNVV…ESRSFTTEAI (130 aa)). The allosteric domain stretch occupies residues 930-1059 (LHLPNFGNVV…ESRSFTTEAI (130 aa)).

The protein belongs to the CarB family. Composed of two chains; the small (or glutamine) chain promotes the hydrolysis of glutamine to ammonia, which is used by the large (or ammonia) chain to synthesize carbamoyl phosphate. Tetramer of heterodimers (alpha,beta)4. The cofactor is Mg(2+). Mn(2+) serves as cofactor.

It carries out the reaction hydrogencarbonate + L-glutamine + 2 ATP + H2O = carbamoyl phosphate + L-glutamate + 2 ADP + phosphate + 2 H(+). The catalysed reaction is hydrogencarbonate + NH4(+) + 2 ATP = carbamoyl phosphate + 2 ADP + phosphate + 2 H(+). Its pathway is amino-acid biosynthesis; L-arginine biosynthesis; carbamoyl phosphate from bicarbonate: step 1/1. The protein operates within pyrimidine metabolism; UMP biosynthesis via de novo pathway; (S)-dihydroorotate from bicarbonate: step 1/3. Its function is as follows. Large subunit of the glutamine-dependent carbamoyl phosphate synthetase (CPSase). CPSase catalyzes the formation of carbamoyl phosphate from the ammonia moiety of glutamine, carbonate, and phosphate donated by ATP, constituting the first step of 2 biosynthetic pathways, one leading to arginine and/or urea and the other to pyrimidine nucleotides. The large subunit (synthetase) binds the substrates ammonia (free or transferred from glutamine from the small subunit), hydrogencarbonate and ATP and carries out an ATP-coupled ligase reaction, activating hydrogencarbonate by forming carboxy phosphate which reacts with ammonia to form carbamoyl phosphate. This chain is Carbamoyl phosphate synthase large chain, found in Streptococcus gordonii (strain Challis / ATCC 35105 / BCRC 15272 / CH1 / DL1 / V288).